Reading from the N-terminus, the 3582-residue chain is MCENCADLVEVLNEISDIEGGDGLQLRKEHTLKIFAYINSWTQRQCLCCFKEYKHLEIFNQVVCALINLVIAQVQVLRDQLCKHCTTINIDSTWQDESNQAEEPLSIDRECNEGNTERQKSIEKKSNSTRTCNLTEEESSKSSDPFSLWNTDEKEKLLLCVAKIFQIQFPLYTAYKHNTHPTIEDISTQESNILGAFCDMNDVEVPLHLLRYVCLFCGKNGLSLMKDCFEYGTPETLPFLIAHAFITVVSNIRIWLHIPAVMQHIIPFRTYVIRYLCKLSDQELRQSAARNMADLMWSTVKEPLDTTLCFDKESLDLAFKYFMSPTLTMRLAGLSQITNQLHTFNDVCNNESLVSDTETSIAKELADWLISNNVVEHIFGPNLHIEIIKQCQVILNFLAAEGRLSTQHIDCIWAAAQLKHCSRYIHDLFPSLIKNLDPVPLRHLLNLVSALEPGVHTEQTLYLASMLIKALWNNALAAKAQLSKQSSFASLLNTNMPIGNKKEEEELRRAAPSPWSPAASPQSSDNSDTHQSGASDIEMDEQLINRNKHVQQRLSDTEESMQGSSDETANSGEDGSSGPGSSSGHSDGSSNEVNSSHASQSAGSPGSEVQSEDIADIEALKEEEEEEEEEEEEEEEEDDEEEEDEEEDDDDDDDHGHNPAKNTCGTELRNRKLENPAGICLGESQGTSERNGTNSGTGKDLVFNTEPLPSVDNRIRMLDACAHSEDPEHGISGEVSSAHLAQGSQEACITRSGDFLGETIGNELFNCRQFIGPQHHHHHHHHHHHHHHHHHHHHHHHDGHMVDDMLSADDVSCSSSQVSAKSEKNMADFDGEESGCEEELVQINSHAELTSHLQQHLPNLASIYHEHLSQGPAVHKHQFSSNAVTDINLDNVCKKGNTLLWDIVQDDDAINLSEGLINEAEKLLCSLVCWFTDRQIRMRFIEGCLENLGNNRSVVISLRLLPKLFGTFQQFGSSYDTHWITMWAEKELNMMKLFFDNLVYYIQGIREGRQKHALYSHSAEVQVRLQFLTCVFSTLGSPDHFRLSLEQVDILWHCLVEDSECYDDALHWFLNQVRSKDQHAMGMETYKHLFLEKMPQLKPETISMTGLNLFQHLCNLARLATSAYDGGSNSELCGMDQFWGIALRAQSGDVSRAAIQYINSYYINGKTGLEKEQEFISKCMESLMIASSSLEQESHSSLTVIERGLLMLKTHLEAFRRRFAYHLRQWQIEGTGISSHLKALSDKQSLPLRVVCQPAGLPDKMTIEMYPSDQVADLRAEVTHWYENLQKEQINQQAQLQEFGQSSRKGEFPGGLMGPVRMISSGHELTTDYDEKALHELGFKDMQMVFVSLGAPRRERKGEGVQLPASCLPPPQKDNIPMLLLLQEPHLTTLFDLLEMLASFKPPSGKVAVDDSESLKCEELHLHAENLSRRVWELLMLLPTCPNMLTAFQNVSDEQSNDGLNWKELLKIKSAHKLLYALEIIEALGKPNRRIRRESTGSYSDLYPDSDDSSEDQVENSKNSWTCKFVAAGGLQQLLEIFNSAILEPKEQESWTVWQLDCLACLLKLICQFAVDPSDLDLAYHDVFAWSGIAESHRKRTWPGKSRKAAGDHAKSLHIPRLTEVFLVLVQGTSLIQRLMSVAYTYDNLAPRVLKAQSDHRSRHEVSHYSMWLLVSWAHCCSLVKSSLADSDHLQDWLKQLTLLIPETAVRHESCNGLYKLSLSGLDGGDSIHRSFLLLAASTLLKFLPDAQALKPPRIDDYEEEPLLKPGCKEYFWLLCKLVDNIHIKDASQTTLLDLDALARHLADCIRSREILDHLDGSIEDDGLSGLLRLATSVIKHKPPFKFSREGQEFLRDIFNLLFLLPSLKDRRQPKCKSHSCRAAAYDLLVEMVKGSVENYRLIHNWVMAQHMQSHAPYKWDYWPHEDVRAECRFVGLTNLGATCYLASTIQQLYMIPEARQAVFTAKYSEDMKHKTTLLELQKMFTYLMESECKAYNPRPFCKTYTMDKQPLNTGEQKDMTEFFTDLITKVEEMSPELKNTVKSLFGGVITNNVVSLDCEHVSQTAEEFYTVRCQVADMKNIYESLDEVTIKDTLEGDNMYTCSHCGKKVRAEKRACFKKLPRILSFNTMRYTFNMVTMMKEKVNTHFSFPLRLDMTPYTEDFLMGKSDRKEGFKDVGDRSKDTESYEYDLIGVTVHTGTADGGHYYSFIRDIVNPHAYKNNKWYLFNDAEVKPFDSAQLASECFGGEMTTKTYDSVTDKFMDFSFEKTHSAYMLFYKRMEPEEENGREYKFDVSSELLEWIWHDNMQFLQDKNIFEHTYFGFMWQLCSCIPSTLPDPKAVSLMTAKLSTSFVLETFIHSKEKPTMLQWIELLTKQFNNSQAACEWFLDRMADDDWWPMQILIKCPNQIVRQMFQRLCIHVIQRLRPVHAHLYLQPGMEDGSDDMDASVEDIGGRSCVTRFVRTLLLIMEHGVKPHSKHLTEYFAFLYEFAKMGEEESQFLLSLQAISTMVHFYMGTKGPENPQVEVLSEEEGEEEEEEEDILSLAEEKYRPAALEKMIALVALLVEQSRSERHLTLSQTDMAALTGGKGFPFLFQHIRDGINIRQTCNLIFSLCRYNNRLAEHIVSMLFTSIAKLTPEAANPFFKLLTMLMEFAGGPPGMPPFASYILQRIWEVIEYNPSQCLDWLAVQTPRNKLAHSWVLQNMENWVERFLLAHNYPRVRTSAAYLLVSLIPSNSFRQMFRSTRSLHIPTRDLPLSPDTTVVLHQVYNVLLGLLSRAKLYVDAAVHGTTKLVPYLSFMTYCLISKTEKLMFSTYFMDLWNLFQPKLSEPAIATNHNKQALLSFWYNVCADCPENIRLIVQNPVVTKNIAFNYILADHDDQDVVLFNRGMLPAYYGILRLCCEQSPAFTRQLASHQNIQWAFKNLTPHASQYPGAVEELFNLMQLFIAQRPDMREEELEDIKQFKKTTISCYLRCLDGRSCWTTLISAFRILLESDEDRLLVVFNRGLILMTESFNTLHMMYHEATACHVTGDLVELLSIFLSVLKSTRPYLQRKDVKQALIQWQERIEFAHKLLTLLNSYSPPELRNACIDVLKELVLLSPHDFLHTLVPFLQHNHCTYHHSNIPMSLGPYFPCRENIKLIGGKSNIRPPRPELNMCLLPTMVETSKGKDDVYDRMLLDYFFSYHQFIHLLCRVAINCEKFTETLVKLSVLVAYEGLPLHLALFPKLWTELCQTQSAMSKNCIKLLCEDPVFAEYIKCILMDERTFLNNNIVYTFMTHFLLKVQSQVFSEANCASLISTLITNLINQYQNLQSDFTNRVEISKASAALNGDLRALALLLSVHTPKQLNPALIPTLQELLNKCRTCLQQRNSLQEQEAKERKTKDDEGATPVKRRRVSSDEEHTVDSCIGDIKTETREVLTPTSTSDNETRDSSIIDPGTEQDLPSPENSSVKEYRMEGPSSFSEDGSHIRSQHAEEQSNNGRFDDCKEFKDHCSKDTTLAEDESEFPSTSISAVLSDLADLRSCDGQALSSQDPEAAVSLSCGHSRGLISHMQQHDILDTLCRTIESTIHVVTRISGKGNQAAS.

Ser352, Ser486, Ser487, and Ser490 each carry phosphoserine. 5 disordered regions span residues 503–533 (EEEE…HQSG), 551–670 (QQRL…ELRN), 682–705 (GESQ…VFNT), 775–801 (HHHH…DGHM), and 1496–1515 (TGSY…DQVE). Positions 510 to 524 (AAPSPWSPAASPQSS) are enriched in low complexity. The segment covering 560 to 570 (SMQGSSDETAN) has biased composition (polar residues). Residues 571–590 (SGEDGSSGPGSSSGHSDGSS) are compositionally biased toward low complexity. Over residues 591–609 (NEVNSSHASQSAGSPGSEV) the composition is skewed to polar residues. The span at 610-653 (QSEDIADIEALKEEEEEEEEEEEEEEEEDDEEEEDEEEDDDDDD) shows a compositional bias: acidic residues. Positions 684–697 (SQGTSERNGTNSGT) are enriched in polar residues. Residues 775–798 (HHHHHHHHHHHHHHHHHHHHHHHD) show a composition bias toward basic residues. The span at 1504-1514 (PDSDDSSEDQV) shows a compositional bias: acidic residues. Position 1506 is a phosphoserine (Ser1506). The USP domain maps to 1931–2276 (VGLTNLGATC…SAYMLFYKRM (346 aa)). Cys1940 (nucleophile) is an active-site residue. His2201 (proton acceptor) is an active-site residue. Residue Ser2525 is modified to Phosphoserine. The segment at 3369–3484 (SLQEQEAKER…QSNNGRFDDC (116 aa)) is disordered. Positions 3373–3384 (QEAKERKTKDDE) are enriched in basic and acidic residues. Residues Ser3395 and Ser3396 each carry the phosphoserine modification. Thr3418 is modified (phosphothreonine). Residues Ser3423 and Ser3443 each carry the phosphoserine modification. Positions 3463–3484 (DGSHIRSQHAEEQSNNGRFDDC) are enriched in basic and acidic residues. Ser3539 is modified (phosphoserine).

The protein belongs to the peptidase C19 family. In terms of assembly, interacts with AXIN1 and AXIN2.

The catalysed reaction is Thiol-dependent hydrolysis of ester, thioester, amide, peptide and isopeptide bonds formed by the C-terminal Gly of ubiquitin (a 76-residue protein attached to proteins as an intracellular targeting signal).. Functionally, ubiquitin hydrolase that can remove conjugated ubiquitin from AXIN1 and AXIN2, thereby acting as a regulator of Wnt signaling pathway. Acts as an activator of the Wnt signaling pathway downstream of the beta-catenin destruction complex by deubiquitinating and stabilizing AXIN1 and AXIN2, leading to promote nuclear accumulation of AXIN1 and AXIN2 and positively regulate beta-catenin (CTNBB1)-mediated transcription. Recognizes and hydrolyzes the peptide bond at the C-terminal Gly of ubiquitin. Involved in the processing of poly-ubiquitin precursors as well as that of ubiquitinated proteins. The polypeptide is Ubiquitin carboxyl-terminal hydrolase 34 (Usp34) (Mus musculus (Mouse)).